A 145-amino-acid chain; its full sequence is [Ribosomal protein bS18]-alanine N-acetyltransferase (145 aa).

Residues 1–145 (MIETIVEQDF…ENAVIMALYL (145 aa)) enclose the N-acetyltransferase domain. Residue 67 to 69 (LAV) participates in acetyl-CoA binding. E101 (proton acceptor) is an active-site residue. N106 is an acetyl-CoA binding site. Y113 (proton donor) is an active-site residue.

The protein belongs to the acetyltransferase family. RimI subfamily.

It localises to the cytoplasm. It catalyses the reaction N-terminal L-alanyl-[ribosomal protein bS18] + acetyl-CoA = N-terminal N(alpha)-acetyl-L-alanyl-[ribosomal protein bS18] + CoA + H(+). Its function is as follows. Acetylates the N-terminal alanine of ribosomal protein bS18. The chain is [Ribosomal protein bS18]-alanine N-acetyltransferase from Haemophilus ducreyi (strain 35000HP / ATCC 700724).